Consider the following 204-residue polypeptide: Recombination protein RecR (204 aa).

The C4-type zinc-finger motif lies at 58 to 75 (CSVCQNVTDREEDPCSIC). The region spanning 83–181 (TVICVVESPV…EVTKIARGIP (99 aa)) is the Toprim domain.

It belongs to the RecR family.

Functionally, may play a role in DNA repair. It seems to be involved in an RecBC-independent recombinational process of DNA repair. It may act with RecF and RecO. This is Recombination protein RecR from Chlorobium luteolum (strain DSM 273 / BCRC 81028 / 2530) (Pelodictyon luteolum).